A 159-amino-acid polypeptide reads, in one-letter code: MRPTPMTAILALTLAAAAPAMAASLKDVAPYPEAEKGFTRQVIHLPAQADESAYKLEILAGKTLKVDCNRQRLGGSLEERTLEGWGYNYYRLDKVSGPASTLMACPDGKKTEAFVPVVGDGFLLRYNSKLPVVVYVPKDVEVRYRVWSASQDVQKANVE.

A signal peptide spans 1-22 (MRPTPMTAILALTLAAAAPAMA). Residues C68 and C105 are joined by a disulfide bond.

It belongs to the protease inhibitor I11 (ecotin) family. In terms of assembly, homodimer.

It localises to the periplasm. Functionally, general inhibitor of family S1 serine proteases. The protein is Ecotin of Pseudomonas putida (strain GB-1).